Here is a 933-residue protein sequence, read N- to C-terminus: Clumping factor A (933 aa).

Residues 1–39 (MNMKKKEKHAIRKKSIGVASVLVGTLIGFGLLSSKEADA) form the signal peptide. A YSIRK-G/S signaling motif motif is present at residues 9 to 20 (HAIRKKSIGVAS). Disordered regions lie at residues 34–200 (SKEA…SNKD) and 529–904 (FNNG…SEDE). The interval 40 to 542 (SENSVTQSDS…SGSGDGIDKP (503 aa)) is ligand binding A region. Over residues 47-65 (SDSASNESKSNDSSSVSAA) the composition is skewed to low complexity. Positions 71–105 (TNVSDTKTSSNTNNGETSVAQNPAQQETTQSSSTN) are enriched in polar residues. Over residues 106–132 (ATTEETPVTGEATTTTTNQANTPATTQ) the composition is skewed to low complexity. The span at 133 to 200 (SSNTNAEELV…PQSTDASNKD (68 aa)) shows a compositional bias: polar residues. Residues 547 to 565 (QPDEPGEIEPIPEDSDSDP) are compositionally biased toward acidic residues. Residues 566–598 (GSDSGSDSNSDSGSDSGSDSTSDSGSDSASDSD) are compositionally biased toward low complexity. A compositionally biased stretch (acidic residues) spans 599-861 (SASDSDSASD…DSDSESDSNS (263 aa)). A compositionally biased stretch (low complexity) spans 862 to 880 (DSESGSNNNVVPPNSPKNG). Residues 887 to 896 (NEAKDSKEPL) are compositionally biased toward basic and acidic residues. Residues 896 to 900 (LPDTG) carry the LPXTG sorting signal motif. T899 carries the pentaglycyl murein peptidoglycan amidated threonine modification. A propeptide spans 900 to 933 (GSEDEANTSLIWGLLASIGSLLLFRRKKENKDKK) (removed by sortase).

Belongs to the serine-aspartate repeat-containing protein (SDr) family.

It is found in the secreted. The protein resides in the cell wall. Cell surface-associated protein implicated in virulence. Promotes bacterial attachment exclusively to the gamma-chain of human fibrinogen. Induces formation of bacterial clumps, which diminish the ability of group IIA phospholipase A2 to cause bacterial phospholipid hydrolysis and killing. Significantly decreases macrophage phagocytosis possibly thanks to the clumps, clumped bacteria being too large to be phagocytosed. Dominant factor responsible for human platelet aggregation, which may be an important mechanism for initiating infective endocarditis. Enhances spleen cell proliferative response in vitro, contributing significantly to the immunostimulatory activity of S.aureus. This is Clumping factor A (clfA) from Staphylococcus aureus (strain Newman).